Here is a 987-residue protein sequence, read N- to C-terminus: Collagen alpha-1(I) chain (987 aa).

The segment covering 1-21 (SVPGPMGPSGPRGLPGPPGPG) has biased composition (pro residues). The tract at residues 1-987 (SVPGPMGPSG…PGPPGPPGPP (987 aa)) is disordered. Residues proline 15, proline 18, proline 20, proline 29, proline 32, proline 35, proline 50, proline 65, proline 71, proline 80, and proline 86 each carry the 4-hydroxyproline modification. Residues 23 to 41 (QGFQGPPGEPGEPGSSGPM) are compositionally biased toward low complexity. Basic and acidic residues predominate over residues 53–67 (NGDDGEAGKPGRPGE). A 5-hydroxylysine; alternate modification is found at lysine 89. Lysine 89 carries O-linked (Gal...) hydroxylysine; alternate glycosylation. Position 95 is a phosphoserine (serine 95). Low complexity predominate over residues 103–119 (DAGPAGPKGEPGSPGEN). Proline 113, proline 116, proline 122, proline 131, proline 137, proline 158, proline 167, proline 170, proline 197, proline 200, proline 212, proline 218, proline 227, proline 233, proline 236, and proline 251 each carry 4-hydroxyproline. Positions 137-155 (PGASGPAGARGNDGAAGAA) are enriched in low complexity. Over residues 157 to 169 (PPGPTGPAGPPGF) the composition is skewed to pro residues. Over residues 203–253 (AGAAGPAGNPGADGQPGAKGANGAPGIAGAPGFPGARGPSGPQGPSGAPGP) the composition is skewed to low complexity. Residue lysine 254 is modified to 5-hydroxylysine. 4-hydroxyproline occurs at positions 260, 263, 275, 284, 299, 305, 314, and 320. The segment covering 309 to 318 (GERGGPGSRG) has biased composition (gly residues). The residue at position 329 (lysine 329) is a 5-hydroxylysine. Residues proline 338, proline 347, proline 353, proline 359, proline 368, proline 371, proline 380, proline 389, proline 395, proline 407, proline 416, proline 425, proline 428, proline 446, proline 468, proline 474, proline 480, proline 486, proline 492, proline 504, proline 513, proline 526, proline 532, and proline 541 each carry the 4-hydroxyproline modification. Residues 362-388 (KGLTGSPGSPGPDGKTGPPGPAGQDGR) are compositionally biased toward low complexity. The span at 397–416 (ARGQAGVMGFPGPKGAAGEP) shows a compositional bias: low complexity. The segment covering 458 to 483 (QGPAPGFQGLPGPAGPPGEAGKPGEQ) has biased composition (low complexity). At lysine 553 the chain carries 5-hydroxylysine. Proline 559, proline 574, and proline 580 each carry 4-hydroxyproline. A compositionally biased stretch (low complexity) spans 586–600 (SGPSGPAGPTGARGA). Position 589 is a phosphoserine (serine 589). 4-hydroxyproline occurs at positions 601, 607, 610, 619, 625, 643, 652, and 661. Residues 613–640 (AGFAGPPGADGQPGAKGEPGDAGAKGDA) are compositionally biased toward low complexity. Pro residues predominate over residues 642 to 654 (PPGPAGPTGPPGP). The residue at position 664 (lysine 664) is a 5-hydroxylysine. The span at 669 to 685 (SAGPPGATGFPGAAGRV) shows a compositional bias: low complexity. Proline 673 and proline 679 each carry 4-hydroxyproline. Proline 687 carries the 3-hydroxyproline modification. 4-hydroxyproline occurs at positions 688, 697, 700, 721, 730, 738, 747, 765, 774, 777, 783, 798, 804, 810, 819, and 825. The segment covering 714-723 (ETGPAGRPGE) has biased composition (low complexity). Residues 735 to 747 (KGSPGADGPAGAP) are compositionally biased toward low complexity. Residues 797–807 (PPGPMGPPGLA) show a composition bias toward pro residues. Positions 809-824 (PPGESGREGSPGAEGS) are enriched in low complexity. 5-hydroxylysine is present on lysine 834. Residues 843–858 (AGPPGAPGAPGAPGPV) are compositionally biased toward pro residues. 4-hydroxyproline is present on residues proline 846, proline 849, and proline 852. Residues 879–893 (AGPAGARGPAGPQGP) are compositionally biased toward low complexity. Basic and acidic residues predominate over residues 894 to 905 (RGDKGETGEQGD). Lysine 897 bears the 5-hydroxylysine mark. 4 positions are modified to 4-hydroxyproline: proline 918, proline 921, proline 939, and proline 954. Residues 921–954 (PGEQGPSGASGPAGPRGPPGSAGSPGKDGLNGLP) are compositionally biased toward low complexity. Residue proline 959 is modified to 3-hydroxyproline. Proline 960 carries the 4-hydroxyproline modification. Over residues 972–987 (VGPPGPPGPPGPPGPP) the composition is skewed to pro residues. Proline 974 bears the 3-hydroxyproline mark. The residue at position 975 (proline 975) is a 4-hydroxyproline. Position 977 is a 3-hydroxyproline (proline 977). Residue proline 978 is modified to 4-hydroxyproline. The residue at position 980 (proline 980) is a 3-hydroxyproline. 3 positions are modified to 4-hydroxyproline: proline 981, proline 984, and proline 987.

This sequence belongs to the fibrillar collagen family. In terms of assembly, trimers of one alpha 2(I) and two alpha 1(I) chains. In terms of processing, contains mostly 4-hydroxyproline. Proline residues at the third position of the tripeptide repeating unit (G-X-Y) are hydroxylated in some or all of the chains. Contains 3-hydroxyproline at a few sites. This modification occurs on the first proline residue in the sequence motif Gly-Pro-Hyp, where Hyp is 4-hydroxyproline. Post-translationally, lysine residues at the third position of the tripeptide repeating unit (G-X-Y) are 5-hydroxylated in some or all of the chains. In terms of processing, O-glycosylated on hydroxylated lysine residues. The O-linked glycan consists of a Glc-Gal disaccharide. As to expression, expressed in bones.

It is found in the secreted. The protein resides in the extracellular space. The protein localises to the extracellular matrix. Functionally, type I collagen is a member of group I collagen (fibrillar forming collagen). This is Collagen alpha-1(I) chain from Glossotherium robustum (Ground sloth).